Reading from the N-terminus, the 104-residue chain is Large ribosomal subunit protein uL24 (104 aa).

Belongs to the universal ribosomal protein uL24 family. Part of the 50S ribosomal subunit.

Its function is as follows. One of two assembly initiator proteins, it binds directly to the 5'-end of the 23S rRNA, where it nucleates assembly of the 50S subunit. Functionally, one of the proteins that surrounds the polypeptide exit tunnel on the outside of the subunit. The chain is Large ribosomal subunit protein uL24 from Nitrobacter winogradskyi (strain ATCC 25391 / DSM 10237 / CIP 104748 / NCIMB 11846 / Nb-255).